The following is a 360-amino-acid chain: C-C chemokine receptor-like 2 (360 aa).

The Extracellular segment spans residues 1 to 42 (MDNYTVAPDDEYDVLILDDYLDNSGPDQVPAPEFLSPQQVLQ). The N-linked (GlcNAc...) asparagine glycan is linked to Asn3. The chain crosses the membrane as a helical span at residues 43–63 (FCCAVFAVGLLDNVLAVFILV). The Cytoplasmic portion of the chain corresponds to 64–73 (KYKGLKNLGN). The chain crosses the membrane as a helical span at residues 74–94 (IYFLNLALSNLCFLLPLPFWA). The Extracellular portion of the chain corresponds to 95 to 109 (HTAAHGESPGNGTCK). The N-linked (GlcNAc...) asparagine glycan is linked to Asn105. The cysteines at positions 108 and 185 are disulfide-linked. A helical membrane pass occupies residues 110 to 130 (VLVGLHSSGLYSEVFSNILLL). Residues 131–141 (VQGYRVFSQGR) lie on the Cytoplasmic side of the membrane. Residues 142–162 (LASIFTTVSCGIVACILAWAM) traverse the membrane as a helical segment. Over 163–202 (ATALSLPESVFYEPRMERQKHKCAFGKPHFLPIEAPLWKY) the chain is Extracellular. The helical transmembrane segment at 203 to 223 (VLTSKMIILVLAFPLLVFIIC) threads the bilayer. Over 224–243 (CRQLRRRQSFRERQYDLHKP) the chain is Cytoplasmic. Residues 244 to 264 (ALVITGVFLLMWAPYNTVLFL) traverse the membrane as a helical segment. Residues 265-285 (SAFQEHLSLQDEKSSYHLDAS) are Extracellular-facing. A helical membrane pass occupies residues 286–307 (VQVTQLVATTHCCVNPLLYLLL). The Cytoplasmic segment spans residues 308–360 (DRKAFMRYLRSLFPRCNDIPYQSSGGYQQAPPREGHGRPIELYSNLHQRQDII).

It belongs to the G-protein coupled receptor 1 family. As to expression, expressed in macrophages, astrocytes, in glial cells. Constitutively expressed by mast cells. Detected in bronchial epithelium in OVA-induced airway inflammation. Up-regulated during dendritic cell (DC) maturation.

The protein resides in the cell membrane. Its function is as follows. Receptor for CCL19 and chemerin/RARRES2. Does not appear to be a signaling receptor, but may have a role in modulating chemokine-triggered immune responses by capturing and internalizing CCL19 or by presenting RARRES2 ligand to CMKLR1, a functional signaling receptor. Plays a critical role for the development of Th2 responses. The chain is C-C chemokine receptor-like 2 (Ccrl2) from Mus musculus (Mouse).